Consider the following 241-residue polypeptide: tRNA (cytidine/uridine-2'-O-)-methyltransferase TrmJ (241 aa).

S-adenosyl-L-methionine is bound by residues 79–81 (TSA), Gly-114, Ile-134, and 141–143 (GSL).

It belongs to the class IV-like SAM-binding methyltransferase superfamily. RNA methyltransferase TrmH family. As to quaternary structure, homodimer.

Its subcellular location is the cytoplasm. It carries out the reaction cytidine(32) in tRNA + S-adenosyl-L-methionine = 2'-O-methylcytidine(32) in tRNA + S-adenosyl-L-homocysteine + H(+). The enzyme catalyses uridine(32) in tRNA + S-adenosyl-L-methionine = 2'-O-methyluridine(32) in tRNA + S-adenosyl-L-homocysteine + H(+). Its function is as follows. Catalyzes the formation of 2'O-methylated cytidine (Cm32) or 2'O-methylated uridine (Um32) at position 32 in tRNA. This Photorhabdus laumondii subsp. laumondii (strain DSM 15139 / CIP 105565 / TT01) (Photorhabdus luminescens subsp. laumondii) protein is tRNA (cytidine/uridine-2'-O-)-methyltransferase TrmJ (trmJ).